The primary structure comprises 262 residues: Phosphate import ATP-binding protein PstB (262 aa).

The 243-residue stretch at 15-257 folds into the ABC transporter domain; that stretch reads AKASNLNLWY…PQKSKTEQYI (243 aa). Residue 47-54 participates in ATP binding; it reads GPSGCGKS.

This sequence belongs to the ABC transporter superfamily. Phosphate importer (TC 3.A.1.7) family. The complex is composed of two ATP-binding proteins (PstB), two transmembrane proteins (PstC and PstA) and a solute-binding protein (PstS).

The protein localises to the cell inner membrane. The catalysed reaction is phosphate(out) + ATP + H2O = ADP + 2 phosphate(in) + H(+). Part of the ABC transporter complex PstSACB involved in phosphate import. Responsible for energy coupling to the transport system. The polypeptide is Phosphate import ATP-binding protein PstB (Wolinella succinogenes (strain ATCC 29543 / DSM 1740 / CCUG 13145 / JCM 31913 / LMG 7466 / NCTC 11488 / FDC 602W) (Vibrio succinogenes)).